A 410-amino-acid polypeptide reads, in one-letter code: Arginine deiminase (410 aa).

Residue C400 is the Amidino-cysteine intermediate of the active site.

The protein belongs to the arginine deiminase family.

The protein localises to the cytoplasm. It catalyses the reaction L-arginine + H2O = L-citrulline + NH4(+). Its pathway is amino-acid degradation; L-arginine degradation via ADI pathway; carbamoyl phosphate from L-arginine: step 1/2. This Bacillus cereus (strain ATCC 10987 / NRS 248) protein is Arginine deiminase.